We begin with the raw amino-acid sequence, 427 residues long: UDP-N-acetyl-D-mannosamine dehydrogenase (427 aa).

Residues Tyr-20, Ile-21, Asp-40, Arg-45, Thr-92, and Thr-130 each contribute to the NAD(+) site. The UDP-N-acetyl-alpha-D-mannosaminouronate site is built by Arg-157, Val-158, Lys-209, Asn-213, Arg-216, His-247, Arg-249, and Gly-260. Lys-209 serves as the catalytic Proton donor/acceptor. Cys-263 (nucleophile) is an active-site residue. Tyr-317 and Lys-318 together coordinate UDP-N-acetyl-alpha-D-mannosaminouronate. Arg-325 contacts NAD(+). A UDP-N-acetyl-alpha-D-mannosaminouronate-binding site is contributed by Lys-403.

The protein belongs to the UDP-glucose/GDP-mannose dehydrogenase family. As to quaternary structure, homotetramer; probably dimer of dimers.

It catalyses the reaction UDP-N-acetyl-alpha-D-mannosamine + 2 NAD(+) + H2O = UDP-N-acetyl-alpha-D-mannosaminouronate + 2 NADH + 3 H(+). Catalyzes the four-electron oxidation of UDP-N-acetyl-D-mannosamine (UDP-ManNAc), reducing NAD(+) and releasing UDP-N-acetylmannosaminuronic acid (UDP-ManNAcA). The chain is UDP-N-acetyl-D-mannosamine dehydrogenase (wecC) from Methanocaldococcus jannaschii (strain ATCC 43067 / DSM 2661 / JAL-1 / JCM 10045 / NBRC 100440) (Methanococcus jannaschii).